Reading from the N-terminus, the 91-residue chain is DNA-directed RNA polymerase subunit omega (91 aa).

This sequence belongs to the RNA polymerase subunit omega family. In terms of assembly, the RNAP catalytic core consists of 2 alpha, 1 beta, 1 beta' and 1 omega subunit. When a sigma factor is associated with the core the holoenzyme is formed, which can initiate transcription. The rRNA transcription and antitermination complex (rrnTAC) consists of RNAP, NusA, NusB, NusE (rpsJ), NusG, SubB, ribosomal protein S4, DNA and precursor rRNA; S4 is more flexible than other subunits.

The enzyme catalyses RNA(n) + a ribonucleoside 5'-triphosphate = RNA(n+1) + diphosphate. Functionally, promotes RNA polymerase (RNAP) assembly. Latches the N- and C-terminal regions of the beta' subunit thereby facilitating its interaction with the beta and alpha subunits. Part of the processive rRNA transcription and antitermination complex (rrnTAC). The complex forms an RNA-chaperone ring around the RNA exit tunnel of RNAP. It supports rapid transcription and antitermination of rRNA operons, cotranscriptional rRNA folding, and annealing of distal rRNA regions to allow correct ribosome biogenesis. This chain is DNA-directed RNA polymerase subunit omega (rpoZ), found in Escherichia coli (strain K12).